The following is a 68-amino-acid chain: MEC1-mediated checkpoint protein HUG1 (68 aa).

The protein localises to the cytoplasm. Its subcellular location is the nucleus. Functionally, involved in the MEC1-mediated checkpoint response to DNA damage and replication arrest. This is MEC1-mediated checkpoint protein HUG1 (HUG1) from Saccharomyces cerevisiae (strain ATCC 204508 / S288c) (Baker's yeast).